We begin with the raw amino-acid sequence, 127 residues long: Large ribosomal subunit protein uL18 (127 aa).

Residues 1–26 (MASTLTVRKSLSDRAKARARRQARGR) form a disordered region. Positions 17-26 (ARARRQARGR) are enriched in basic residues.

It belongs to the universal ribosomal protein uL18 family. In terms of assembly, part of the 50S ribosomal subunit; part of the 5S rRNA/L5/L18/L25 subcomplex. Contacts the 5S and 23S rRNAs.

In terms of biological role, this is one of the proteins that bind and probably mediate the attachment of the 5S RNA into the large ribosomal subunit, where it forms part of the central protuberance. This Cutibacterium acnes (strain DSM 16379 / KPA171202) (Propionibacterium acnes) protein is Large ribosomal subunit protein uL18.